The primary structure comprises 375 residues: Cobalt-precorrin-5B C(1)-methyltransferase (375 aa).

The protein belongs to the CbiD family.

It carries out the reaction Co-precorrin-5B + S-adenosyl-L-methionine = Co-precorrin-6A + S-adenosyl-L-homocysteine. Its pathway is cofactor biosynthesis; adenosylcobalamin biosynthesis; cob(II)yrinate a,c-diamide from sirohydrochlorin (anaerobic route): step 6/10. Its function is as follows. Catalyzes the methylation of C-1 in cobalt-precorrin-5B to form cobalt-precorrin-6A. The polypeptide is Cobalt-precorrin-5B C(1)-methyltransferase (Paracidovorax citrulli (strain AAC00-1) (Acidovorax citrulli)).